The sequence spans 298 residues: tRNA pseudouridine synthase B (298 aa).

D45 functions as the Nucleophile in the catalytic mechanism.

Belongs to the pseudouridine synthase TruB family. Type 1 subfamily.

The catalysed reaction is uridine(55) in tRNA = pseudouridine(55) in tRNA. Responsible for synthesis of pseudouridine from uracil-55 in the psi GC loop of transfer RNAs. The protein is tRNA pseudouridine synthase B of Thiobacillus denitrificans (strain ATCC 25259 / T1).